Reading from the N-terminus, the 182-residue chain is ATP synthase subunit delta (182 aa).

Belongs to the ATPase delta chain family. In terms of assembly, F-type ATPases have 2 components, F(1) - the catalytic core - and F(0) - the membrane proton channel. F(1) has five subunits: alpha(3), beta(3), gamma(1), delta(1), epsilon(1). F(0) has three main subunits: a(1), b(2) and c(10-14). The alpha and beta chains form an alternating ring which encloses part of the gamma chain. F(1) is attached to F(0) by a central stalk formed by the gamma and epsilon chains, while a peripheral stalk is formed by the delta and b chains.

The protein localises to the cell membrane. In terms of biological role, f(1)F(0) ATP synthase produces ATP from ADP in the presence of a proton or sodium gradient. F-type ATPases consist of two structural domains, F(1) containing the extramembraneous catalytic core and F(0) containing the membrane proton channel, linked together by a central stalk and a peripheral stalk. During catalysis, ATP synthesis in the catalytic domain of F(1) is coupled via a rotary mechanism of the central stalk subunits to proton translocation. Its function is as follows. This protein is part of the stalk that links CF(0) to CF(1). It either transmits conformational changes from CF(0) to CF(1) or is implicated in proton conduction. In Alkalihalophilus pseudofirmus (strain ATCC BAA-2126 / JCM 17055 / OF4) (Bacillus pseudofirmus), this protein is ATP synthase subunit delta.